The following is a 200-amino-acid chain: Ribonuclease T2 (200 aa).

The cysteines at positions 17 and 22 are disulfide-linked. His32 is an active-site residue. A disulfide bridge connects residues Cys42 and Cys89. N-linked (GlcNAc...) asparagine glycans are attached at residues Asn43 and Asn73. Catalysis depends on residues Glu82 and His86. N-linked (GlcNAc...) asparagine glycosylation occurs at Asn116. Cystine bridges form between Cys152–Cys188 and Cys170–Cys180.

Belongs to the RNase T2 family.

The protein localises to the secreted. The protein resides in the lysosome lumen. Its subcellular location is the endoplasmic reticulum lumen. It is found in the mitochondrion intermembrane space. It catalyses the reaction a ribonucleotidyl-ribonucleotide-RNA + H2O = a 3'-end 3'-phospho-ribonucleotide-RNA + a 5'-end dephospho-ribonucleoside-RNA + H(+). The catalysed reaction is an adenylyl-uridine-RNA = a 3'-end 2',3'-cyclophospho-AMP-RNA + a 5'-end dephospho-uridine-RNA. The enzyme catalyses a guanylyl-uridine-RNA = a 3'-end 2',3'-cyclophospho-GMP-RNA + a 5'-end dephospho-uridine-RNA. Inhibited by Zn(2+) and Cu(2+). In terms of biological role, ribonuclease that plays an essential role in innate immune response by recognizing and degrading RNAs from microbial pathogens that are subsequently sensed by TLR8. Cleaves preferentially single-stranded RNA molecules between purine and uridine residues, which critically contributes to the supply of catabolic uridine and the generation of purine-2',3'-cyclophosphate-terminated oligoribonucleotides. In turn, RNase T2 degradation products promote the RNA-dependent activation of TLR8. In plasmacytoid dendritic cells, it cooperates with PLD3 or PLD4 5'-&gt;3' exonucleases to process RNA fragments and release 2',3'-cyclic guanosine monophosphate (2',3'-cGMP), a potent stimulatory ligand for TLR7. Also plays a key role in degradation of mitochondrial RNA and processing of non-coding RNA imported from the cytosol into mitochondria. Participates as well in degradation of mitochondrion-associated cytosolic rRNAs. This chain is Ribonuclease T2 (RNASET2), found in Sus scrofa (Pig).